The chain runs to 306 residues: Elongation factor Ts (306 aa).

The involved in Mg(2+) ion dislocation from EF-Tu stretch occupies residues 79–82 (TDFV).

This sequence belongs to the EF-Ts family.

Its subcellular location is the cytoplasm. In terms of biological role, associates with the EF-Tu.GDP complex and induces the exchange of GDP to GTP. It remains bound to the aminoacyl-tRNA.EF-Tu.GTP complex up to the GTP hydrolysis stage on the ribosome. In Mesorhizobium japonicum (strain LMG 29417 / CECT 9101 / MAFF 303099) (Mesorhizobium loti (strain MAFF 303099)), this protein is Elongation factor Ts.